A 369-amino-acid polypeptide reads, in one-letter code: MTVFTPLVLVCAGGTGGHLFPAQSLAYALKDRGIRVALATDARVDSIAGDFPAEEIVTIASATPSGRSVLRRAGAVVTLGRGFGQAARAVRRLNPAAVVGFGGYPTVPPMLAAQLLRVPTILHEQNAVMGRANGFLAKGARVIATGFKEVRGVPEKATARRVHTGNPIRPAVLAVAETPYPSLDAEAPLRLLVFGGSQGARVMSEVVPAAIEKLPQDLRARLHLVQQARPEDLTATQNRYLAMGLGGIEAAPFFKDLPGRMASAHLVVARSGASTVSELAAIGRPAILVPLPGALDQDQAANAATLAQIGAALSIPQSAFTPDRLAAELVDLFEAPRKLTQAAAAAKTACILDAADRLAALVAETAAAT.

Residues 15 to 17 (TGG), asparagine 126, arginine 169, serine 197, and glutamine 299 each bind UDP-N-acetyl-alpha-D-glucosamine.

This sequence belongs to the glycosyltransferase 28 family. MurG subfamily.

The protein localises to the cell inner membrane. It carries out the reaction di-trans,octa-cis-undecaprenyl diphospho-N-acetyl-alpha-D-muramoyl-L-alanyl-D-glutamyl-meso-2,6-diaminopimeloyl-D-alanyl-D-alanine + UDP-N-acetyl-alpha-D-glucosamine = di-trans,octa-cis-undecaprenyl diphospho-[N-acetyl-alpha-D-glucosaminyl-(1-&gt;4)]-N-acetyl-alpha-D-muramoyl-L-alanyl-D-glutamyl-meso-2,6-diaminopimeloyl-D-alanyl-D-alanine + UDP + H(+). Its pathway is cell wall biogenesis; peptidoglycan biosynthesis. Cell wall formation. Catalyzes the transfer of a GlcNAc subunit on undecaprenyl-pyrophosphoryl-MurNAc-pentapeptide (lipid intermediate I) to form undecaprenyl-pyrophosphoryl-MurNAc-(pentapeptide)GlcNAc (lipid intermediate II). The chain is UDP-N-acetylglucosamine--N-acetylmuramyl-(pentapeptide) pyrophosphoryl-undecaprenol N-acetylglucosamine transferase from Methylorubrum extorquens (strain PA1) (Methylobacterium extorquens).